The chain runs to 377 residues: Alkane 1-monooxygenase 2 (377 aa).

A run of 4 helical transmembrane segments spans residues G17–G37, A43–V63, V87–L107, and V116–V136. Residues H138, H142, H168, H172, and H173 each coordinate Fe cation. A helical transmembrane segment spans residues A236–G256. Fe cation contacts are provided by H312, H315, and H316.

This sequence belongs to the fatty acid desaturase type 1 family. AlkB subfamily. It depends on Fe(3+) as a cofactor.

The protein resides in the cell inner membrane. It carries out the reaction octane + 2 reduced [rubredoxin] + O2 + 2 H(+) = 2 oxidized [rubredoxin] + octan-1-ol + H2O. The protein operates within hydrocarbon metabolism; alkane degradation. Its function is as follows. Catalyzes the hydroxylation of n-alkanes in the presence of a NADH-rubredoxin reductase and rubredoxin. It preferably hydroxylases C12-C20 hydrocarbons. This is Alkane 1-monooxygenase 2 (alkB2) from Pseudomonas aeruginosa (strain ATCC 15692 / DSM 22644 / CIP 104116 / JCM 14847 / LMG 12228 / 1C / PRS 101 / PAO1).